Consider the following 43-residue polypeptide: Protein PsbN (43 aa).

The helical transmembrane segment at threonine 5–phenylalanine 27 threads the bilayer.

This sequence belongs to the PsbN family.

It is found in the plastid. The protein localises to the chloroplast thylakoid membrane. May play a role in photosystem I and II biogenesis. This Houttuynia cordata (Chameleon plant) protein is Protein PsbN.